Reading from the N-terminus, the 466-residue chain is Fumarate hydratase class II (466 aa).

Residues 99–101 (SGT), 129–132 (HPND), 139–141 (SSN), and Thr-187 contribute to the substrate site. His-188 acts as the Proton donor/acceptor in catalysis. Residue Ser-318 is part of the active site. Substrate-binding positions include Ser-319 and 324–326 (KVN).

It belongs to the class-II fumarase/aspartase family. Fumarase subfamily. In terms of assembly, homotetramer.

It is found in the cytoplasm. The enzyme catalyses (S)-malate = fumarate + H2O. Its pathway is carbohydrate metabolism; tricarboxylic acid cycle; (S)-malate from fumarate: step 1/1. Its function is as follows. Involved in the TCA cycle. Catalyzes the stereospecific interconversion of fumarate to L-malate. In Thermus thermophilus (strain ATCC BAA-163 / DSM 7039 / HB27), this protein is Fumarate hydratase class II.